A 120-amino-acid polypeptide reads, in one-letter code: Large ribosomal subunit protein uL29A (120 aa).

A phosphoserine mark is found at serine 13 and serine 50.

It belongs to the universal ribosomal protein uL29 family. In terms of assembly, component of the large ribosomal subunit (LSU). Mature yeast ribosomes consist of a small (40S) and a large (60S) subunit. The 40S small subunit contains 1 molecule of ribosomal RNA (18S rRNA) and 33 different proteins (encoded by 57 genes). The large 60S subunit contains 3 rRNA molecules (25S, 5.8S and 5S rRNA) and 46 different proteins (encoded by 81 genes). uL29 is associated with the polypeptide exit tunnel.

The protein resides in the cytoplasm. Functionally, component of the ribosome, a large ribonucleoprotein complex responsible for the synthesis of proteins in the cell. The small ribosomal subunit (SSU) binds messenger RNAs (mRNAs) and translates the encoded message by selecting cognate aminoacyl-transfer RNA (tRNA) molecules. The large subunit (LSU) contains the ribosomal catalytic site termed the peptidyl transferase center (PTC), which catalyzes the formation of peptide bonds, thereby polymerizing the amino acids delivered by tRNAs into a polypeptide chain. The nascent polypeptides leave the ribosome through a tunnel in the LSU and interact with protein factors that function in enzymatic processing, targeting, and the membrane insertion of nascent chains at the exit of the ribosomal tunnel. The chain is Large ribosomal subunit protein uL29A from Saccharomyces cerevisiae (strain ATCC 204508 / S288c) (Baker's yeast).